Here is a 590-residue protein sequence, read N- to C-terminus: Aspartate--tRNA(Asp/Asn) ligase (590 aa).

Glu-182 contributes to the L-aspartate binding site. The segment at 206–209 (QLFK) is aspartate. An L-aspartate-binding site is contributed by Arg-228. Residues 228–230 (RDE) and Gln-237 each bind ATP. An L-aspartate-binding site is contributed by His-454. An ATP-binding site is contributed by Glu-488. Arg-495 is an L-aspartate binding site. 540–543 (GLDR) is an ATP binding site.

Belongs to the class-II aminoacyl-tRNA synthetase family. Type 1 subfamily. As to quaternary structure, homodimer.

The protein resides in the cytoplasm. It catalyses the reaction tRNA(Asx) + L-aspartate + ATP = L-aspartyl-tRNA(Asx) + AMP + diphosphate. In terms of biological role, aspartyl-tRNA synthetase with relaxed tRNA specificity since it is able to aspartylate not only its cognate tRNA(Asp) but also tRNA(Asn). Reaction proceeds in two steps: L-aspartate is first activated by ATP to form Asp-AMP and then transferred to the acceptor end of tRNA(Asp/Asn). The polypeptide is Aspartate--tRNA(Asp/Asn) ligase (Halothermothrix orenii (strain H 168 / OCM 544 / DSM 9562)).